Reading from the N-terminus, the 355-residue chain is Peptide chain release factor 1 (355 aa).

At Gln-233 the chain carries N5-methylglutamine. Residues Glu-280–Phe-310 are disordered.

This sequence belongs to the prokaryotic/mitochondrial release factor family. Post-translationally, methylated by PrmC. Methylation increases the termination efficiency of RF1.

Its subcellular location is the cytoplasm. Its function is as follows. Peptide chain release factor 1 directs the termination of translation in response to the peptide chain termination codons UAG and UAA. In Rickettsia canadensis (strain McKiel), this protein is Peptide chain release factor 1.